Consider the following 567-residue polypeptide: Urease subunit alpha (567 aa).

A Urease domain is found at 129-567; it reads GGIDAHIHFI…LPLAQRYFLF (439 aa). Ni(2+) contacts are provided by His-134, His-136, and Lys-217. Lys-217 is modified (N6-carboxylysine). His-219 contributes to the substrate binding site. Positions 246 and 272 each coordinate Ni(2+). His-320 functions as the Proton donor in the catalytic mechanism. Ni(2+) is bound at residue Asp-360.

The protein belongs to the metallo-dependent hydrolases superfamily. Urease alpha subunit family. As to quaternary structure, heterotrimer of UreA (gamma), UreB (beta) and UreC (alpha) subunits. Three heterotrimers associate to form the active enzyme. It depends on Ni cation as a cofactor. In terms of processing, carboxylation allows a single lysine to coordinate two nickel ions.

It is found in the cytoplasm. It catalyses the reaction urea + 2 H2O + H(+) = hydrogencarbonate + 2 NH4(+). It participates in nitrogen metabolism; urea degradation; CO(2) and NH(3) from urea (urease route): step 1/1. The polypeptide is Urease subunit alpha (Hahella chejuensis (strain KCTC 2396)).